A 301-amino-acid polypeptide reads, in one-letter code: Vomeronasal type-1 receptor 4 (301 aa).

Residues 1 to 15 (MASRYVAVGMMLSQT) are Extracellular-facing. A helical membrane pass occupies residues 16-36 (VVGVLGSFSLLLHYLSLHYIG). Over 37–48 (CRLRSADLIVKH) the chain is Cytoplasmic. The chain crosses the membrane as a helical span at residues 49 to 69 (LIAASFLTLLCKGVPQTMAAF). At 70-88 (RVRYFLNAIGCKLVFYLHR) the chain is on the extracellular side. The chain crosses the membrane as a helical span at residues 89–107 (VGRGVSTGTTCLLSVFQVI). Over 108–126 (TVSSRKSRWAKLKEKAPKH) the chain is Cytoplasmic. Residues 127–147 (VGFSVLLCWILCMLVNIIFPI) traverse the membrane as a helical segment. The Extracellular segment spans residues 148 to 185 (YVTGKRNHTNITVNKDLGDCCGRGNNKIAQTLRAMLLS). Residues Asn154 and Asn157 are each glycosylated (N-linked (GlcNAc...) asparagine). A helical transmembrane segment spans residues 186 to 206 (FPDVLCLGFMLWASSSMVCIL). Residues 207–234 (HRHKQRVQHIHRSNLSPRASPENRATQS) lie on the Cytoplasmic side of the membrane. Residues 235 to 255 (ILIPVSTFVSSYTLSCLLQVC) traverse the membrane as a helical segment. Residues 256-264 (MALLDNPNS) lie on the Extracellular side of the membrane. The chain crosses the membrane as a helical span at residues 265–285 (LLVNTSALMSACFPTLSPFVL). Topologically, residues 286–301 (MSCDPSVYRLCFAWKR) are cytoplasmic.

The protein belongs to the G-protein coupled receptor 1 family.

It is found in the cell membrane. Putative pheromone receptor. The protein is Vomeronasal type-1 receptor 4 (VN1R4) of Pongo pygmaeus (Bornean orangutan).